The primary structure comprises 268 residues: Undecaprenyl-diphosphatase (268 aa).

7 helical membrane-spanning segments follow: residues 43–63, 83–103, 109–129, 144–164, 184–204, 218–238, and 246–266; these read FWNT…VVIY, FVIG…IAGK, LFNP…LMWV, FPLP…IPGV, AAEF…AYDF, IVAI…KAFL, and FTFF…ALAL.

This sequence belongs to the UppP family.

It is found in the cell inner membrane. The enzyme catalyses di-trans,octa-cis-undecaprenyl diphosphate + H2O = di-trans,octa-cis-undecaprenyl phosphate + phosphate + H(+). Catalyzes the dephosphorylation of undecaprenyl diphosphate (UPP). Confers resistance to bacitracin. This is Undecaprenyl-diphosphatase from Nitrobacter hamburgensis (strain DSM 10229 / NCIMB 13809 / X14).